Consider the following 201-residue polypeptide: 3-isopropylmalate dehydratase small subunit (201 aa).

Belongs to the LeuD family. LeuD type 1 subfamily. In terms of assembly, heterodimer of LeuC and LeuD.

It catalyses the reaction (2R,3S)-3-isopropylmalate = (2S)-2-isopropylmalate. It functions in the pathway amino-acid biosynthesis; L-leucine biosynthesis; L-leucine from 3-methyl-2-oxobutanoate: step 2/4. In terms of biological role, catalyzes the isomerization between 2-isopropylmalate and 3-isopropylmalate, via the formation of 2-isopropylmaleate. This chain is 3-isopropylmalate dehydratase small subunit, found in Shewanella halifaxensis (strain HAW-EB4).